The chain runs to 742 residues: Synaptic vesicle glycoprotein 2A (742 aa).

An interaction with SYT1 region spans residues 1–57; sequence MEEGFRDRAAFIRGAKDIAKEVKKHATKKVVKGLDRVQDEYSRRSYSRFEEEDDDDD. The Cytoplasmic portion of the chain corresponds to 1-169; sequence MEEGFRDRAA…GHGRFQWTLY (169 aa). Over residues 32-49 the composition is skewed to basic and acidic residues; that stretch reads KGLDRVQDEYSRRSYSRF. The segment at 32–144 is disordered; that stretch reads KGLDRVQDEY…GRGEAQRRKE (113 aa). Phosphoserine occurs at positions 80 and 81. T84 carries the phosphothreonine modification. Positions 122-137 are enriched in gly residues; the sequence is VRGGLGDGEGPPGGRG. The helical transmembrane segment at 170 to 190 threads the bilayer; the sequence is FVLGLALMADGVEVFVVGFVL. Residues 191-205 are Extracellular-facing; it reads PSAEKDMCLSDSNKG. The chain crosses the membrane as a helical span at residues 206-226; the sequence is MLGLIVYLGMMVGAFLWGGLA. The Cytoplasmic portion of the chain corresponds to 227 to 233; sequence DRLGRRQ. The helical transmembrane segment at 234-254 threads the bilayer; the sequence is CLLISLSVNSVFAFFSSFVQG. Topologically, residues 255-262 are extracellular; that stretch reads YGTFLFCR. Residues 263–283 form a helical membrane-spanning segment; that stretch reads LLSGVGIGGSIPIVFSYFSEF. Residues 284–294 lie on the Cytoplasmic side of the membrane; that stretch reads LAQEKRGEHLS. A helical transmembrane segment spans residues 295–315; it reads WLCMFWMIGGVYAAAMAWAII. Residues 316–334 are Extracellular-facing; the sequence is PHYGWSFQMGSAYQFHSWR. The chain crosses the membrane as a helical span at residues 335-355; it reads VFVLVCAFPSVFAIGALTTQP. Over 356–447 the chain is Cytoplasmic; sequence ESPRFFLENG…CFGPEYRRIT (92 aa). Residue S393 is modified to Phosphoserine. The helical transmembrane segment at 448–468 threads the bilayer; it reads LMMMGVWFTMSFSYYGLTVWF. At 469–598 the chain is on the extracellular side; sequence PDMIRHLQAV…GTGEGAYMVY (130 aa). Y480 is subject to Phosphotyrosine. N-linked (GlcNAc...) asparagine glycans are attached at residues N498, N548, and N573. Residues 599 to 619 form a helical membrane-spanning segment; sequence FVSFLGTLAVLPGNIVSALLM. Residues 620–626 lie on the Cytoplasmic side of the membrane; it reads DKIGRLR. A helical membrane pass occupies residues 627 to 647; the sequence is MLAGSSVMSCVSCFFLSFGNS. Residues 648 to 651 lie on the Extracellular side of the membrane; that stretch reads ESAM. A helical transmembrane segment spans residues 652 to 672; it reads IALLCLFGGVSIASWNALDVL. Topologically, residues 673-685 are cytoplasmic; that stretch reads TVELYPSDKRTTA. Residues 686–708 form a helical membrane-spanning segment; it reads FGFLNALCKLAAVLGISIFTSFV. Topologically, residues 709–712 are extracellular; it reads GITK. Residues 713-731 form a helical membrane-spanning segment; sequence AAPILFASAALALGSSLAL. The Cytoplasmic segment spans residues 732-742; that stretch reads KLPETRGQVLQ.

It belongs to the major facilitator superfamily. As to quaternary structure, interacts with SYT1/synaptotagmin-1 in a calcium-dependent manner. Binds the adapter protein complex AP-2. In terms of processing, phosphorylation by CK1 of the N-terminal cytoplasmic domain regulates interaction with SYT1. Post-translationally, N-glycosylated.

It localises to the presynapse. It is found in the cytoplasmic vesicle. Its subcellular location is the secretory vesicle. The protein resides in the synaptic vesicle membrane. Its function is as follows. Plays a role in the control of regulated secretion in neural and endocrine cells, enhancing selectively low-frequency neurotransmission. Positively regulates vesicle fusion by maintaining the readily releasable pool of secretory vesicles. The protein is Synaptic vesicle glycoprotein 2A (SV2A) of Bos taurus (Bovine).